The sequence spans 479 residues: Probable glycine dehydrogenase (decarboxylating) subunit 2 (479 aa).

An N6-(pyridoxal phosphate)lysine modification is found at Lys-265.

Belongs to the GcvP family. C-terminal subunit subfamily. The glycine cleavage system is composed of four proteins: P, T, L and H. In this organism, the P 'protein' is a heterodimer of two subunits. It depends on pyridoxal 5'-phosphate as a cofactor.

It catalyses the reaction N(6)-[(R)-lipoyl]-L-lysyl-[glycine-cleavage complex H protein] + glycine + H(+) = N(6)-[(R)-S(8)-aminomethyldihydrolipoyl]-L-lysyl-[glycine-cleavage complex H protein] + CO2. The glycine cleavage system catalyzes the degradation of glycine. The P protein binds the alpha-amino group of glycine through its pyridoxal phosphate cofactor; CO(2) is released and the remaining methylamine moiety is then transferred to the lipoamide cofactor of the H protein. This chain is Probable glycine dehydrogenase (decarboxylating) subunit 2, found in Pseudothermotoga lettingae (strain ATCC BAA-301 / DSM 14385 / NBRC 107922 / TMO) (Thermotoga lettingae).